A 334-amino-acid polypeptide reads, in one-letter code: Flotillin-like protein FloA (334 aa).

Residues Leu-3–Leu-23 form a helical membrane-spanning segment.

Belongs to the flotillin-like FloA family. Homooligomerizes.

Its subcellular location is the cell membrane. The protein resides in the membrane raft. In terms of biological role, found in functional membrane microdomains (FMM) that may be equivalent to eukaryotic membrane rafts. FMMs are highly dynamic and increase in number as cells age. Flotillins are thought to be important factors in membrane fluidity. The chain is Flotillin-like protein FloA from Opitutus terrae (strain DSM 11246 / JCM 15787 / PB90-1).